Consider the following 376-residue polypeptide: Lateral eye opsin (376 aa).

Residues 1-46 lie on the Extracellular side of the membrane; sequence MANQLSYSSLGWPYQPNASVVDTMPKEMLYMIHEHWYAFPPMNPLW. Residue N17 is glycosylated (N-linked (GlcNAc...) asparagine). Residues 47–71 traverse the membrane as a helical segment; the sequence is YSILGVAMIILGIICVLGNGMVIYL. At 72 to 83 the chain is on the cytoplasmic side; that stretch reads MMTTKSLRTPTN. A helical membrane pass occupies residues 84-108; the sequence is LLVVNLAFSDFCMMAFMMPTMTSNC. Residues 109-123 lie on the Extracellular side of the membrane; that stretch reads FAETWILGPFMCEVY. An intrachain disulfide couples C120 to C197. A helical transmembrane segment spans residues 124 to 143; that stretch reads GMAGSLFGCASIWSMVMITL. The Cytoplasmic portion of the chain corresponds to 144–162; that stretch reads DRYNVIVRGMAAAPLTHKK. A helical transmembrane segment spans residues 163–186; the sequence is ATLLLLFVWIWSGGWTILPFFGWS. Over 187–210 the chain is Extracellular; the sequence is RYVPEGNLTSCTVDYLTKDWSSAS. N-linked (GlcNAc...) asparagine glycosylation is present at N193. The helical transmembrane segment at 211 to 238 threads the bilayer; the sequence is YVVIYGLAVYFLPLITMIYCYFFIVHAV. The Cytoplasmic portion of the chain corresponds to 239-274; the sequence is AEHEKQLREQAKKMNVASLRANADQQKQSAECRLAK. The chain crosses the membrane as a helical span at residues 275–298; it reads VAMMTVGLWFMAWTPYLIISWAGV. Topologically, residues 299–306 are extracellular; that stretch reads FSSGTRLT. Residues 307–331 traverse the membrane as a helical segment; the sequence is PLATIWGSVFAKANSCYNPIVYGIS. K318 bears the N6-(retinylidene)lysine mark. The Cytoplasmic portion of the chain corresponds to 332 to 376; that stretch reads HPRYKAALYQRFPSLACGSGESGSDVKSEASATTTMEEKPKIPEA. The segment at 349–376 is disordered; the sequence is GSGESGSDVKSEASATTTMEEKPKIPEA. A compositionally biased stretch (basic and acidic residues) spans 367-376; it reads MEEKPKIPEA.

The protein belongs to the G-protein coupled receptor 1 family. Opsin subfamily. Phosphorylated on some or all of the serine and threonine residues present in the C-terminal region. In terms of tissue distribution, lateral eye.

It is found in the membrane. Visual pigments are the light-absorbing molecules that mediate vision. They consist of an apoprotein, opsin, covalently linked to cis-retinal. This Limulus polyphemus (Atlantic horseshoe crab) protein is Lateral eye opsin.